Reading from the N-terminus, the 515-residue chain is ATP synthase subunit alpha (515 aa).

An ATP-binding site is contributed by 171–178 (GDRQTGKT).

The protein belongs to the ATPase alpha/beta chains family. As to quaternary structure, F-type ATPases have 2 components, CF(1) - the catalytic core - and CF(0) - the membrane proton channel. CF(1) has five subunits: alpha(3), beta(3), gamma(1), delta(1), epsilon(1). CF(0) has three main subunits: a(1), b(2) and c(9-12). The alpha and beta chains form an alternating ring which encloses part of the gamma chain. CF(1) is attached to CF(0) by a central stalk formed by the gamma and epsilon chains, while a peripheral stalk is formed by the delta and b chains.

It is found in the cell inner membrane. It carries out the reaction ATP + H2O + 4 H(+)(in) = ADP + phosphate + 5 H(+)(out). Functionally, produces ATP from ADP in the presence of a proton gradient across the membrane. The alpha chain is a regulatory subunit. This chain is ATP synthase subunit alpha, found in Xylella fastidiosa (strain 9a5c).